Here is a 213-residue protein sequence, read N- to C-terminus: N-(5'-phosphoribosyl)anthranilate isomerase (213 aa).

This sequence belongs to the TrpF family.

The catalysed reaction is N-(5-phospho-beta-D-ribosyl)anthranilate = 1-(2-carboxyphenylamino)-1-deoxy-D-ribulose 5-phosphate. The protein operates within amino-acid biosynthesis; L-tryptophan biosynthesis; L-tryptophan from chorismate: step 3/5. The polypeptide is N-(5'-phosphoribosyl)anthranilate isomerase (Methylibium petroleiphilum (strain ATCC BAA-1232 / LMG 22953 / PM1)).